We begin with the raw amino-acid sequence, 190 residues long: Peptidyl-tRNA hydrolase (190 aa).

Tyr14 serves as a coordination point for tRNA. Residue His19 is the Proton acceptor of the active site. Residues Tyr64, Asn66, and Asn112 each coordinate tRNA.

The protein belongs to the PTH family. In terms of assembly, monomer.

It localises to the cytoplasm. The enzyme catalyses an N-acyl-L-alpha-aminoacyl-tRNA + H2O = an N-acyl-L-amino acid + a tRNA + H(+). Its function is as follows. Hydrolyzes ribosome-free peptidyl-tRNAs (with 1 or more amino acids incorporated), which drop off the ribosome during protein synthesis, or as a result of ribosome stalling. Catalyzes the release of premature peptidyl moieties from peptidyl-tRNA molecules trapped in stalled 50S ribosomal subunits, and thus maintains levels of free tRNAs and 50S ribosomes. The polypeptide is Peptidyl-tRNA hydrolase (Chlorobium limicola (strain DSM 245 / NBRC 103803 / 6330)).